The primary structure comprises 763 residues: uncharacterized protein (763 aa).

A TR mART core domain is found at 380 to 607 (DSVLNPFNTN…YNIKVITMRL (228 aa)). The chain crosses the membrane as a helical span at residues 684–700 (SYVSIYALLCPLLTNIY).

The protein resides in the membrane. This is an uncharacterized protein from Acanthamoeba polyphaga mimivirus (APMV).